The chain runs to 356 residues: Non-functional pseudokinase ZRK15 (356 aa).

Positions 62–356 constitute a Protein kinase domain; it reads NRVSELFDEI…SSSSCGETSL (295 aa). ATP-binding positions include 68–76 and lysine 94; that span reads FDEIPYDWY.

It belongs to the protein kinase superfamily. Ser/Thr protein kinase family. ZRK subfamily. In terms of assembly, interacts with RPP13L4/ZAR1.

This chain is Non-functional pseudokinase ZRK15, found in Arabidopsis thaliana (Mouse-ear cress).